A 362-amino-acid chain; its full sequence is Sulfate/thiosulfate import ATP-binding protein CysA (362 aa).

The ABC transporter domain occupies 13-243; it reads ITVRDAYKRY…PTNAFVMSFL (231 aa). ATP is bound at residue 45 to 52; sequence GPSGSGKS.

The protein belongs to the ABC transporter superfamily. Sulfate/tungstate importer (TC 3.A.1.6) family. As to quaternary structure, the complex is composed of two ATP-binding proteins (CysA), two transmembrane proteins (CysT and CysW) and a solute-binding protein (CysP).

The protein resides in the cell membrane. It catalyses the reaction sulfate(out) + ATP + H2O = sulfate(in) + ADP + phosphate + H(+). It carries out the reaction thiosulfate(out) + ATP + H2O = thiosulfate(in) + ADP + phosphate + H(+). Part of the ABC transporter complex CysAWTP involved in sulfate/thiosulfate import. Responsible for energy coupling to the transport system. The polypeptide is Sulfate/thiosulfate import ATP-binding protein CysA (Mycolicibacterium paratuberculosis (strain ATCC BAA-968 / K-10) (Mycobacterium paratuberculosis)).